Reading from the N-terminus, the 273-residue chain is Bidirectional sugar transporter SWEET1a (273 aa).

Residues 1-6 lie on the Extracellular side of the membrane; the sequence is MEHIAR. The chain crosses the membrane as a helical span at residues 7 to 27; the sequence is FFFGVSGNVIALFLFLSPVVT. Residues 7 to 95 enclose the MtN3/slv 1 domain; that stretch reads FFFGVSGNVI…VIFLIFAERK (89 aa). Over 28-42 the chain is Cytoplasmic; it reads FWRIIKKRSTEDFSG. The helical transmembrane segment at 43 to 63 threads the bilayer; sequence VPYNMTLLNCLLSAWYGLPFV. The Extracellular portion of the chain corresponds to 64–71; it reads SPNNILVT. The chain crosses the membrane as a helical span at residues 72–92; it reads TINGTGSVIEAIYVVIFLIFA. Residues 93–101 lie on the Cytoplasmic side of the membrane; that stretch reads ERKARLKMM. A helical transmembrane segment spans residues 102 to 122; the sequence is GLLGLVTSIFTMVVLVSLLAL. Residues 123 to 128 are Extracellular-facing; sequence HGQGRK. A helical transmembrane segment spans residues 129-149; it reads LFCGLAATIFSICMYASPLSI. A MtN3/slv 2 domain is found at 131–214; that stretch reads CGLAATIFSI…ILYAIYRNHK (84 aa). Topologically, residues 150-163 are cytoplasmic; it reads MRLVIKTKSVEFMP. A helical membrane pass occupies residues 164–184; it reads FLLSLSVFLCGTSWFIYGLLG. Topologically, residues 185–188 are extracellular; that stretch reads RDPF. The helical transmembrane segment at 189–209 threads the bilayer; the sequence is IAIPNGCGSFLGLMQLILYAI. Residues 210–273 are Cytoplasmic-facing; sequence YRNHKGATPA…SADDKVASQV (64 aa).

The protein belongs to the SWEET sugar transporter family. As to quaternary structure, forms homooligomers and/or heterooligomers.

Its subcellular location is the cell membrane. In terms of biological role, mediates both low-affinity uptake and efflux of sugar across the plasma membrane. The protein is Bidirectional sugar transporter SWEET1a (SWEET1A) of Oryza sativa subsp. japonica (Rice).